A 257-amino-acid polypeptide reads, in one-letter code: Phosphonates import ATP-binding protein PhnC (257 aa).

Positions 2 to 246 (IEFRNVSKVY…KFAEIYGDVV (245 aa)) constitute an ABC transporter domain. 35–42 (GLSGAGKS) contacts ATP.

The protein belongs to the ABC transporter superfamily. Phosphonates importer (TC 3.A.1.9.1) family. The complex is composed of two ATP-binding proteins (PhnC), two transmembrane proteins (PhnE) and a solute-binding protein (PhnD).

Its subcellular location is the cell membrane. The enzyme catalyses phosphonate(out) + ATP + H2O = phosphonate(in) + ADP + phosphate + H(+). Functionally, part of the ABC transporter complex PhnCDE involved in phosphonates import. Responsible for energy coupling to the transport system. The polypeptide is Phosphonates import ATP-binding protein PhnC (Bacillus anthracis).